The sequence spans 387 residues: Galactokinase (387 aa).

Substrate is bound at residue 32 to 35 (EHTD). ATP-binding positions include Ser66 and 123–129 (GAGLSSS). Ser129 and Glu161 together coordinate Mg(2+). Residue Asp173 is the Proton acceptor of the active site. Tyr223 contributes to the substrate binding site.

Belongs to the GHMP kinase family. GalK subfamily.

The protein resides in the cytoplasm. The catalysed reaction is alpha-D-galactose + ATP = alpha-D-galactose 1-phosphate + ADP + H(+). Its pathway is carbohydrate metabolism; galactose metabolism. In terms of biological role, catalyzes the transfer of the gamma-phosphate of ATP to D-galactose to form alpha-D-galactose-1-phosphate (Gal-1-P). In Enterococcus faecalis (strain ATCC 700802 / V583), this protein is Galactokinase.